The sequence spans 79 residues: Moronecidin (79 aa).

The N-terminal stretch at 1 to 22 (MKCATLSLVLSMVVLMAEPGDA) is a signal peptide. The residue at position 44 (Gly-44) is a Glycine amide. Positions 45 to 68 (GKAEQDQQDQQYQQDQQDQQAQQY) are disordered. Positions 47–79 (AEQDQQDQQYQQDQQDQQAQQYQRFNRERAAFD) are excised as a propeptide. Over residues 52 to 68 (QDQQYQQDQQDQQAQQY) the composition is skewed to low complexity.

Expressed in gill, skin, intestine, spleen, anterior kidney, and blood cells.

It localises to the secreted. Antimicrobial peptide with broad-spectrum activity against Gram-positive and Gram-negative bacteria as well as against a variety of fungi. Rapidly inactivates both channel catfish herpesvirus (ED(50)=4 uM) and frog virus 3 (ED(50)=13 uM) over a wide temperature range. Seems to disrupt the membranes by adopting an alpha helical conformation. This is Moronecidin from Morone chrysops (White bass).